Reading from the N-terminus, the 574-residue chain is MASTEGANNMPKQVEVRMHDSHLGSEEPKHRHLGLRLCDKLGKNLLLTLTVFGVILGAVCGGLLRLASPIHPDVVMLIAFPGDILMRMLKMLILPLIISSLITGLSGLDAKASGRLGTRAMVYYMSTTIIAAVLGVILVLAIHPGNPKLKKQLGPGKKNDEVSSLDAFLDLIRNLFPENLVQACFQQIQTVTKKVLVAPPPDEEANATSAVVSLLNETVTEVPEETKMVIKKGLEFKDGMNVLGLIGFFIAFGIAMGKMGDQAKLMVDFFNILNEIVMKLVIMIMWYSPLGIACLICGKIIAIKDLEVVARQLGMYMVTVIIGLIIHGGIFLPLIYFVVTRKNPFSFFAGIFQAWITALGTASSAGTLPVTFRCLEENLGIDKRVTRFVLPVGATINMDGTALYEAVAAIFIAQMNGVVLDGGQIVTVSLTATLASVGAASIPSAGLVTMLLILTAVGLPTEDISLLVAVDWLLDRMRTSVNVVGDSFGAGIVYHLSKSELDTIDSQHRVHEDIEMTKTQSIYDDMKNHRESNSNQCVYAAHNSVIVDECKVTLAANGKSADCSVEEEPWKREK.

Residues 1-44 (MASTEGANNMPKQVEVRMHDSHLGSEEPKHRHLGLRLCDKLGKN) lie on the Cytoplasmic side of the membrane. Phosphoserine is present on residues S3, S21, and S25. C38 is lipidated: S-palmitoyl cysteine. The chain crosses the membrane as a helical span at residues 45–64 (LLLTLTVFGVILGAVCGGLL). Residues 65–87 (RLASPIHPDVVMLIAFPGDILMR) lie on the Extracellular side of the membrane. The helical transmembrane segment at 88 to 108 (MLKMLILPLIISSLITGLSGL) threads the bilayer. The Cytoplasmic portion of the chain corresponds to 109-120 (DAKASGRLGTRA). A helical transmembrane segment spans residues 121-142 (MVYYMSTTIIAAVLGVILVLAI). The Extracellular portion of the chain corresponds to 143 to 235 (HPGNPKLKKQ…TKMVIKKGLE (93 aa)). N206 and N216 each carry an N-linked (GlcNAc...) asparagine glycan. The chain crosses the membrane as a helical span at residues 236-259 (FKDGMNVLGLIGFFIAFGIAMGKM). Residues 260-268 (GDQAKLMVD) are Cytoplasmic-facing. A helical membrane pass occupies residues 269-296 (FFNILNEIVMKLVIMIMWYSPLGIACLI). Topologically, residues 297-317 (CGKIIAIKDLEVVARQLGMYM) are extracellular. Residues 318 to 339 (VTVIIGLIIHGGIFLPLIYFVV) form a helical membrane-spanning segment. The Cytoplasmic portion of the chain corresponds to 340-344 (TRKNP). The discontinuously helical intramembrane region spans 345–375 (FSFFAGIFQAWITALGTASSAGTLPVTFRCL). Residue 362–364 (ASS) coordinates L-aspartate. The Cytoplasmic segment spans residues 376–384 (EENLGIDKR). Residues 385-411 (VTRFVLPVGATINMDGTALYEAVAAIF) traverse the membrane as a helical segment. Na(+) is bound by residues G393, T395, and N397. T401 is a binding site for L-aspartate. The Extracellular segment spans residues 412 to 424 (IAQMNGVVLDGGQ). The segment at residues 425–458 (IVTVSLTATLASVGAASIPSAGLVTMLLILTAVG) is an intramembrane region (discontinuously helical). 442–446 (IPSAG) serves as a coordination point for L-aspartate. Residues 459-471 (LPTEDISLLVAVD) lie on the Extracellular side of the membrane. The chain crosses the membrane as a helical span at residues 472 to 493 (WLLDRMRTSVNVVGDSFGAGIV). 2 residues coordinate L-aspartate: D475 and N482. Na(+)-binding residues include N482 and D486. The Cytoplasmic portion of the chain corresponds to 494–574 (YHLSKSELDT…VEEEPWKREK (81 aa)). A phosphoserine mark is found at S506, S521, S532, and S534. The residue at position 539 (Y539) is a Phosphotyrosine. S544, S560, and S564 each carry phosphoserine.

Belongs to the dicarboxylate/amino acid:cation symporter (DAACS) (TC 2.A.23) family. SLC1A2 subfamily. As to quaternary structure, homotrimer. Isoform 3 can oligomerize with isoform 1. Interacts with AJUBA. Glycosylated. Post-translationally, palmitoylation at Cys-38 is not required for correct subcellular localization, but is important for glutamate uptake activity.

Its subcellular location is the cell membrane. The catalysed reaction is K(+)(in) + L-glutamate(out) + 3 Na(+)(out) + H(+)(out) = K(+)(out) + L-glutamate(in) + 3 Na(+)(in) + H(+)(in). It carries out the reaction K(+)(in) + L-aspartate(out) + 3 Na(+)(out) + H(+)(out) = K(+)(out) + L-aspartate(in) + 3 Na(+)(in) + H(+)(in). It catalyses the reaction D-aspartate(out) + K(+)(in) + 3 Na(+)(out) + H(+)(out) = D-aspartate(in) + K(+)(out) + 3 Na(+)(in) + H(+)(in). Its function is as follows. Sodium-dependent, high-affinity amino acid transporter that mediates the uptake of L-glutamate and also L-aspartate and D-aspartate. Functions as a symporter that transports one amino acid molecule together with two or three Na(+) ions and one proton, in parallel with the counter-transport of one K(+) ion. Mediates Cl(-) flux that is not coupled to amino acid transport; this avoids the accumulation of negative charges due to aspartate and Na(+) symport. Essential for the rapid removal of released glutamate from the synaptic cleft, and for terminating the postsynaptic action of glutamate. This is Excitatory amino acid transporter 2 from Homo sapiens (Human).